The sequence spans 312 residues: MNYMRTAVLLAGLTALFMVVGFAIGGKGGMMVALLVAAGMNLFSYWYADKIVLGMYGAREVDMRTAPEFVAMVAELARRAELPMPKVYIIDNPQPNAFATGRNPQNAAVAATTGLLQTLNPDEVAGVMAHELAHVKHHDTLTMTITASIAGAISMLANFGLFFGGGNRESNNPFGGISAILMAILAPIAAMVVQMAISRSREYEADRGGAEICGQPLALASALAKIAGGAHAVPNYAAEANPATAHMFIINPLSGARMDNLFSTHPNTENRIAALEDLARQMGGYRPAPARAAPARGPWGGNTGGTRRGPWG.

2 helical membrane passes run threonine 6–glycine 26 and glycine 28–alanine 48. Zn(2+) is bound at residue histidine 130. Glutamate 131 is a catalytic residue. Zn(2+) is bound at residue histidine 134. Transmembrane regions (helical) follow at residues isoleucine 145–glycine 165 and proline 173–valine 193. Glutamate 202 is a binding site for Zn(2+). The segment covering proline 287–glycine 297 has biased composition (low complexity). The interval proline 287–glycine 312 is disordered. Positions proline 298–glycine 312 are enriched in gly residues.

Belongs to the peptidase M48B family. Zn(2+) is required as a cofactor.

Its subcellular location is the cell inner membrane. The protein is Protease HtpX homolog of Azorhizobium caulinodans (strain ATCC 43989 / DSM 5975 / JCM 20966 / LMG 6465 / NBRC 14845 / NCIMB 13405 / ORS 571).